The sequence spans 493 residues: EGF-containing fibulin-like extracellular matrix protein 1 (493 aa).

Residues 1-17 (MLKALFLTMLTLALVKS) form the signal peptide. Residues 26–71 (YTQCTDGYEWDPVRQQCKDIDECDIVPDACKGGMKCVNHYGGYLCL) form the EGF-like 1; atypical domain. The EGF-like 2; calcium-binding domain occupies 173-213 (DIDECTAGTHNCRADQVCINLRGSFACQCPPGYQKRGEQCV). 15 cysteine pairs are disulfide-bonded: C177/C190, C184/C199, C201/C212, C218/C228, C224/C237, C239/C252, C258/C268, C264/C277, C279/C292, C298/C309, C305/C318, C320/C332, C338/C350, C344/C359, and C365/C377. The EGF-like 3; calcium-binding domain maps to 214–253 (DIDECTIPPYCHQRCVNTPGSFYCQCSPGFQLAANNYTCV). N249 carries an N-linked (GlcNAc...) asparagine glycan. One can recognise an EGF-like 4; calcium-binding domain in the interval 254–293 (DINECDASNQCAQQCYNILGSFICQCNQGYELSSDRLNCE). Positions 259-493 (DASNQCAQQC…LTIIVGPFSF (235 aa)) are mediates interaction with TIMP3. In terms of domain architecture, EGF-like 5; calcium-binding spans 294 to 333 (DIDECRTSSYLCQYQCVNEPGKFSCMCPQGYQVVRSRTCQ). The 45-residue stretch at 334–378 (DINECETTNECREDEMCWNYHGGFRCYPRNPCQDPYILTPENRCV) folds into the EGF-like 6; calcium-binding domain.

Belongs to the fibulin family. Interacts with ECM1. Interacts with TIMP3. As to expression, in the eye, associated with photoreceptor outer and inner segment regions, the nerve fiber layer, outer nuclear layer and inner and outer plexiform layers of the retina.

The protein localises to the secreted. The protein resides in the extracellular space. It is found in the extracellular matrix. Binds EGFR, the EGF receptor, inducing EGFR autophosphorylation and the activation of downstream signaling pathways. May play a role in cell adhesion and migration. May function as a negative regulator of chondrocyte differentiation. In the olfactory epithelium, it may regulate glial cell migration, differentiation and the ability of glial cells to support neuronal neurite outgrowth. The sequence is that of EGF-containing fibulin-like extracellular matrix protein 1 (EFEMP1) from Homo sapiens (Human).